The following is a 106-amino-acid chain: L-rhamnose mutarotase (106 aa).

Substrate is bound at residue Tyr-20. Residue His-24 is the Proton donor of the active site. Substrate-binding positions include Tyr-43 and 78–79 (WW).

The protein belongs to the rhamnose mutarotase family. Homodimer.

The protein resides in the cytoplasm. The catalysed reaction is alpha-L-rhamnose = beta-L-rhamnose. Its pathway is carbohydrate metabolism; L-rhamnose metabolism. Involved in the anomeric conversion of L-rhamnose. The protein is L-rhamnose mutarotase of Rhizobium johnstonii (strain DSM 114642 / LMG 32736 / 3841) (Rhizobium leguminosarum bv. viciae).